The primary structure comprises 326 residues: Putative F-box protein At3g22710 (326 aa).

The region spanning 1-50 is the F-box domain; the sequence is MTMPDLPPDLVEEILSRVPATSVKKLRSTCTQWNAIFKDERFTEKHFSKA.

The protein is Putative F-box protein At3g22710 of Arabidopsis thaliana (Mouse-ear cress).